The chain runs to 63 residues: Keratin-associated protein 8-1 (63 aa).

Positions 12 to 54 are 12 X 2 AA repeats of G-[YCGS]; it reads PGCYWGSYGYPLGYSVGCGYGSTYSPVGYGFGYGYNGCGAFGY.

Belongs to the KRTAP type 8 family. Interacts with hair keratins. Is essentially restricted to only one vertical half of the hair forming compartment and in beard hairs is absent from the central medulla.

In the hair cortex, hair keratin intermediate filaments are embedded in an interfilamentous matrix, consisting of hair keratin-associated proteins (KRTAP), which are essential for the formation of a rigid and resistant hair shaft through their extensive disulfide bond cross-linking with abundant cysteine residues of hair keratins. The matrix proteins include the high-sulfur and high-glycine-tyrosine keratins. In Homo sapiens (Human), this protein is Keratin-associated protein 8-1 (KRTAP8-1).